The sequence spans 366 residues: DNA-directed RNA polymerase subunit alpha (366 aa).

Residues 1–233 (MVREKVRVST…DLFLPFLHAE (233 aa)) form an alpha N-terminal domain (alpha-NTD) region. Residues 264 to 366 (KNEIALKSIF…KDEMGFESLE (103 aa)) form an alpha C-terminal domain (alpha-CTD) region.

This sequence belongs to the RNA polymerase alpha chain family. In terms of assembly, in plastids the minimal PEP RNA polymerase catalytic core is composed of four subunits: alpha, beta, beta', and beta''. When a (nuclear-encoded) sigma factor is associated with the core the holoenzyme is formed, which can initiate transcription.

It is found in the plastid. The protein resides in the chloroplast. The catalysed reaction is RNA(n) + a ribonucleoside 5'-triphosphate = RNA(n+1) + diphosphate. DNA-dependent RNA polymerase catalyzes the transcription of DNA into RNA using the four ribonucleoside triphosphates as substrates. This Oenothera elata subsp. hookeri (Hooker's evening primrose) protein is DNA-directed RNA polymerase subunit alpha.